The primary structure comprises 119 residues: Holo-[acyl-carrier-protein] synthase (119 aa).

2 residues coordinate Mg(2+): Asp-5 and Glu-51.

Belongs to the P-Pant transferase superfamily. AcpS family. It depends on Mg(2+) as a cofactor.

Its subcellular location is the cytoplasm. It catalyses the reaction apo-[ACP] + CoA = holo-[ACP] + adenosine 3',5'-bisphosphate + H(+). In terms of biological role, transfers the 4'-phosphopantetheine moiety from coenzyme A to a Ser of acyl-carrier-protein. This chain is Holo-[acyl-carrier-protein] synthase, found in Helicobacter pylori (strain HPAG1).